We begin with the raw amino-acid sequence, 159 residues long: MRRDETIYILRPTMSEEHINTVIENTNKIILDDAGTIIFYEPSGAUKSLLTUSRKSSQGYYVYCDYAGTPAAVSEMERRFRIEDAVLKYMTVKLSEDISAEEIQQAIGDIAAREAAVKEAAEAEEAANEEVVEKVVEKVAEKAAEKTVEEAAPVKETEE.

Non-standard amino acids (selenocysteine) are located at U46 and U52.

It belongs to the bacterial ribosomal protein bS6 family.

Functionally, binds together with bS18 to 16S ribosomal RNA. In Desulfotalea psychrophila (strain LSv54 / DSM 12343), this protein is Small ribosomal subunit protein bS6.